Here is a 160-residue protein sequence, read N- to C-terminus: Large ribosomal subunit protein uL15 (160 aa).

The segment covering 1 to 13 has biased composition (basic and acidic residues); the sequence is MKLHELSDNDGAA. Residues 1–42 are disordered; the sequence is MKLHELSDNDGAAKKRKRVGRGPGSGTGKMGGRGIKGQKSRS. Gly residues predominate over residues 21–35; sequence RGPGSGTGKMGGRGI.

Belongs to the universal ribosomal protein uL15 family. In terms of assembly, part of the 50S ribosomal subunit.

Its function is as follows. Binds to the 23S rRNA. The protein is Large ribosomal subunit protein uL15 of Roseobacter denitrificans (strain ATCC 33942 / OCh 114) (Erythrobacter sp. (strain OCh 114)).